We begin with the raw amino-acid sequence, 286 residues long: NADPH-dependent 7-cyano-7-deazaguanine reductase (286 aa).

Substrate is bound at residue 92-94 (IES). 94 to 95 (SK) serves as a coordination point for NADPH. Cysteine 194 acts as the Thioimide intermediate in catalysis. The Proton donor role is filled by aspartate 201. 233 to 234 (HE) provides a ligand contact to substrate. 262 to 263 (RG) contacts NADPH.

This sequence belongs to the GTP cyclohydrolase I family. QueF type 2 subfamily. As to quaternary structure, homodimer.

Its subcellular location is the cytoplasm. It carries out the reaction 7-aminomethyl-7-carbaguanine + 2 NADP(+) = 7-cyano-7-deazaguanine + 2 NADPH + 3 H(+). It functions in the pathway tRNA modification; tRNA-queuosine biosynthesis. In terms of biological role, catalyzes the NADPH-dependent reduction of 7-cyano-7-deazaguanine (preQ0) to 7-aminomethyl-7-deazaguanine (preQ1). In Shewanella sp. (strain MR-7), this protein is NADPH-dependent 7-cyano-7-deazaguanine reductase.